Here is a 699-residue protein sequence, read N- to C-terminus: DnaJ homolog subfamily C member 14 (699 aa).

The interval 1 to 230 is disordered; it reads MAQKHPGEGG…RHRLGRKRSQ (230 aa). Over residues 75–84 the composition is skewed to pro residues; sequence HGPPRGPGPP. The span at 86-102 shows a compositional bias: acidic residues; it reads AEEDPDQSEASSEESGV. Polar residues predominate over residues 117–133; that stretch reads DGNSSFLSIPSTCNCQG. Residues 163–176 show a composition bias toward acidic residues; the sequence is GEDEELEGEYDEEE. Residues 203–218 are compositionally biased toward basic and acidic residues; that stretch reads PAKEDTREGGRRDPRS. A compositionally biased stretch (basic residues) spans 219 to 228; that stretch reads PGRHRLGRKR. The next 3 helical transmembrane spans lie at 251 to 271, 301 to 321, and 327 to 347; these read AGFWWLIELLVLVGEYVETCG, GWAQVMFQFLSQGFCYGAGLF, and LVGALLLLALALLLGCLQLGW. Positions 444 to 508 constitute a J domain; sequence NPFHVLGVEA…ERRKEYEMKR (65 aa). The disordered stretch occupies residues 655–699; sequence MSNGNFFAAPQPGPGATAASKPNSTVPKGEAKPKRRKKVRRPFQR. Positions 662 to 673 are enriched in low complexity; sequence AAPQPGPGATAA. Residues 687–699 show a composition bias toward basic residues; it reads PKRRKKVRRPFQR.

In terms of assembly, interacts with the FxxxFxxxF motif of DRD1 via its C-terminal domain. Interacts with pestivirus nonstructural protein NS2.

Its subcellular location is the endoplasmic reticulum membrane. Its function is as follows. Regulates the export of target proteins, such as DRD1, from the endoplasmic reticulum to the cell surface. Promotes cleavage of pestivirus polyprotein. The protein is DnaJ homolog subfamily C member 14 (DNAJC14) of Bos taurus (Bovine).